We begin with the raw amino-acid sequence, 185 residues long: MISVNDFRTGLTIEVDGDIWRVIEFQHVKPGKGAAFVRSKLRNLRTGAIQEKTFRAGEKVSKAQIDNRKMQYLYANGDQHVFMDMESYEQIELPAKQIEHELKFLKENMEVFIMMYQGETIGVELPNTVELKVVETEPGIKGDTASGGSKPATLETGLVVQVPFFVNEGDVLIINTTDGTYVSRA.

It belongs to the elongation factor P family.

The protein localises to the cytoplasm. It participates in protein biosynthesis; polypeptide chain elongation. Functionally, involved in peptide bond synthesis. Stimulates efficient translation and peptide-bond synthesis on native or reconstituted 70S ribosomes in vitro. Probably functions indirectly by altering the affinity of the ribosome for aminoacyl-tRNA, thus increasing their reactivity as acceptors for peptidyl transferase. This Anoxybacillus flavithermus (strain DSM 21510 / WK1) protein is Elongation factor P.